The sequence spans 1068 residues: Rho family-interacting cell polarization regulator 2 (1068 aa).

Phosphoserine; in isoform is present on residues Ser21 and Ser37. Positions 45–73 (LKKPQAKLKKMHNLGHKNNNPPKEPQPKR) are disordered. Residues 48-59 (PQAKLKKMHNLG) show a composition bias toward basic residues. Residues 55–113 (MHNLGHKNNNPPKEPQPKRVEEVYRALKNGLDEYLEVHQTELDKLTAQLKDMKRNSRLG) form an involved in cell filopodia formation region. Residues 83–112 (NGLDEYLEVHQTELDKLTAQLKDMKRNSRL) adopt a coiled-coil conformation. Position 341 is a phosphoserine; in isoform 2 (Ser341). A compositionally biased stretch (polar residues) spans 474 to 491 (QNEGMDDTSSASSRNSLG). The disordered stretch occupies residues 474-524 (QNEGMDDTSSASSRNSLGEGQEPKSHLKEEDPEEPRKPASAPSEACRRQSS). A compositionally biased stretch (basic and acidic residues) spans 494–510 (QEPKSHLKEEDPEEPRK). Position 523 is a phosphoserine; in isoform 2 (Ser523). The residue at position 573 (Ser573) is a Phosphoserine. Position 585 is a phosphoserine; in isoform 2 (Ser585). Positions 768–793 (VARSLLEKLSRQIQVMEKLAAVSDEN) form a coiled coil.

The protein belongs to the RIPOR family. In terms of assembly, homooligomer; homooligomerization is regulated by RHOC and leads to the formation of concatemers through the association of N- and C-termini. Interacts with 14-3-3 proteins; these interactions occur during myogenic cell differentiation. Interacts with HDAC6; this interaction occurs during early myogenic differentiation and prevents HDAC6 to deacetylate tubulin. Interacts with DYSF; this interaction occurs during early myogenic differentiation. Interacts with MYOF. Interacts with RHOC. Isoform 1 and isoform 2 interact (via active GTP- or inactive GDP-bound forms) with RHOA; these interactions are direct, block the loading of GTP to RHOA and decrease upon chemokine CCL19 stimulation in primary T lymphocytes. Isoform 2 interacts (phosphorylated form) with HDAC6; this interaction induces T cell proliferation arrest. Isoform 2 interacts (phosphorylated form) with 14-3-3 proteins; these interactions induces T cell proliferation arrest. Isoform 2 interacts with 14-3-3 proteins. Isoform 2 interacts (via phosphorylated form) with YWHAB; this interaction occurs in a chemokine-dependent manner and does not compete for binding of RIPOR2 with RHOA nor blocks inhibition of RIPOR2-mediated RHOA activity. Isoform 2 interacts with YWHAE. Isoform 2 interacts with YWHAQ. Phosphorylated. Isoform 2 is phosphorylated in T cells. Chemokine-induced phosphorylation of isoform 2 in neutrophils occurs in a PKC- and AKT-dependent manner, resulting in RIPOR2 interaction with YWHAB and stabilization. Isoform 2 is phosphorylated by PKCA, AKT1 and MAPKAPK1A; in vitro. Post-translationally, acetylated during myogenic differentiation. In terms of tissue distribution, expressed in primary fetal mononuclear myoblast. Expressed strongly in naive T lymphocytes. Expressed weakly in activated T lymphocytes (at protein level). Expressed in blood cells and adult tissues of hematopoietic origin, such as the secondary lymphoid organs. Expressed in cytotrophoblast.

Its subcellular location is the cytoplasm. It is found in the cytoskeleton. The protein resides in the cell projection. It localises to the filopodium. The protein localises to the stereocilium. Its subcellular location is the stereocilium membrane. It is found in the apical cell membrane. Acts as an inhibitor of the small GTPase RHOA and plays several roles in the regulation of myoblast and hair cell differentiation, lymphocyte T proliferation and neutrophil polarization. Inhibits chemokine-induced T lymphocyte responses, such as cell adhesion, polarization and migration. Involved also in the regulation of neutrophil polarization, chemotaxis and adhesion. Required for normal development of inner and outer hair cell stereocilia within the cochlea of the inner ear. Plays a role for maintaining the structural organization of the basal domain of stereocilia. Involved in mechanosensory hair cell function. Required for normal hearing. Its function is as follows. Acts as an inhibitor of the small GTPase RHOA. Plays a role in fetal mononuclear myoblast differentiation by promoting filopodia and myotube formation. Maintains naive T lymphocytes in a quiescent state. This Homo sapiens (Human) protein is Rho family-interacting cell polarization regulator 2 (RIPOR2).